The sequence spans 628 residues: Exonuclease V, mitochondrial (628 aa).

A mitochondrion-targeting transit peptide spans 1–21 (MSRFWHFKKFYFTSCYSMQRM). The disordered stretch occupies residues 37–58 (TSEHEQVQSISKEESRSLSSND). Over residues 38 to 52 (SEHEQVQSISKEESR) the composition is skewed to basic and acidic residues. [4Fe-4S] cluster contacts are provided by C164, C586, C589, and C595.

The protein belongs to the EXO5 family. In terms of assembly, monomer. The cofactor is Mg(2+). [4Fe-4S] cluster is required as a cofactor.

The protein localises to the mitochondrion. In terms of biological role, single strand DNA specific 5' exonuclease involved in mitochondrial DNA replication and recombination. Releases dinucleotides as main products of catalysis. Has the capacity to slide across 5'double-stranded DNA or 5'RNA sequences and resumes cutting two nucleotides downstream of the double-stranded-to-single-stranded junction or RNA-to-DNA junction, respectively. The protein is Exonuclease V, mitochondrial (DEM1) of Candida albicans (strain SC5314 / ATCC MYA-2876) (Yeast).